A 106-amino-acid polypeptide reads, in one-letter code: Nucleoid-associated protein Nwi_0368 (106 aa).

It belongs to the YbaB/EbfC family. In terms of assembly, homodimer.

It localises to the cytoplasm. The protein localises to the nucleoid. In terms of biological role, binds to DNA and alters its conformation. May be involved in regulation of gene expression, nucleoid organization and DNA protection. This is Nucleoid-associated protein Nwi_0368 from Nitrobacter winogradskyi (strain ATCC 25391 / DSM 10237 / CIP 104748 / NCIMB 11846 / Nb-255).